The sequence spans 466 residues: ATP synthase subunit beta (466 aa).

ATP is bound at residue 153–160; the sequence is GGAGVGKT.

Belongs to the ATPase alpha/beta chains family. F-type ATPases have 2 components, CF(1) - the catalytic core - and CF(0) - the membrane proton channel. CF(1) has five subunits: alpha(3), beta(3), gamma(1), delta(1), epsilon(1). CF(0) has three main subunits: a(1), b(2) and c(9-12). The alpha and beta chains form an alternating ring which encloses part of the gamma chain. CF(1) is attached to CF(0) by a central stalk formed by the gamma and epsilon chains, while a peripheral stalk is formed by the delta and b chains.

The protein resides in the cell membrane. It catalyses the reaction ATP + H2O + 4 H(+)(in) = ADP + phosphate + 5 H(+)(out). Its function is as follows. Produces ATP from ADP in the presence of a proton gradient across the membrane. The catalytic sites are hosted primarily by the beta subunits. This Leuconostoc citreum (strain KM20) protein is ATP synthase subunit beta.